A 223-amino-acid polypeptide reads, in one-letter code: Type III pantothenate kinase (223 aa).

17–24 (DIGNTHIH) serves as a coordination point for ATP. Substrate is bound by residues Tyr-81 and 85–88 (GIDR). The active-site Proton acceptor is the Asp-87. A K(+)-binding site is contributed by Asp-102. Ser-105 provides a ligand contact to ATP. Thr-157 provides a ligand contact to substrate.

This sequence belongs to the type III pantothenate kinase family. In terms of assembly, homodimer. The cofactor is NH4(+). K(+) serves as cofactor.

It is found in the cytoplasm. It catalyses the reaction (R)-pantothenate + ATP = (R)-4'-phosphopantothenate + ADP + H(+). It functions in the pathway cofactor biosynthesis; coenzyme A biosynthesis; CoA from (R)-pantothenate: step 1/5. Catalyzes the phosphorylation of pantothenate (Pan), the first step in CoA biosynthesis. In Helicobacter pylori (strain HPAG1), this protein is Type III pantothenate kinase.